A 450-amino-acid chain; its full sequence is MRRHAIILAAGKGTRMKSKKYKVLHEVAGKPMVEHVLESVKGSGVDQVVTIVGHGAESVKGHLGERSLYSFQEEQLGTAHAVQMAKSHLEDKEGTTIVVCGDTPLITKETLVTLIAHHEDANAQATVLSASIQQPYGYGRIVRNASGRLERIVEEKDATQAEKDINEISSGIFAFNNKTLFEKLTQVKNDNAQGEYYLPDVLSLILNDGGIVEVYRTNDVEEIMGVNDRVMLSQAEKAMQRRTNHYHMLNGVTIIDPDSTYIGPDVTIGSDTVIEPGVRINGRTEIGEDVVIGQYSEINNSTIENGACIQQSVVNDASVGANTKVGPFAQLRPGAQLGADVKVGNFVEIKKADLKDGAKVSHLSYIGDAVIGERTNIGCGTITVNYDGENKFKTIVGKDSFVGCNVNLVAPVTIGDDVLVAAGSTITDDVPNDSLAVARARQTTKEGYRK.

A pyrophosphorylase region spans residues 1 to 229 (MRRHAIILAA…VEEIMGVNDR (229 aa)). Residues 8 to 11 (LAAG), Lys22, Gln72, and 77 to 78 (GT) each bind UDP-N-acetyl-alpha-D-glucosamine. Asp102 contacts Mg(2+). Gly139, Glu154, and Asn227 together coordinate UDP-N-acetyl-alpha-D-glucosamine. Asn227 lines the Mg(2+) pocket. The interval 230–250 (VMLSQAEKAMQRRTNHYHMLN) is linker. An N-acetyltransferase region spans residues 251 to 450 (GVTIIDPDST…RQTTKEGYRK (200 aa)). Residues Arg332 and Lys350 each coordinate UDP-N-acetyl-alpha-D-glucosamine. The active-site Proton acceptor is His362. 2 residues coordinate UDP-N-acetyl-alpha-D-glucosamine: Tyr365 and Asn376. Acetyl-CoA-binding positions include 385-386 (NY), Ala422, and Arg439.

In the N-terminal section; belongs to the N-acetylglucosamine-1-phosphate uridyltransferase family. It in the C-terminal section; belongs to the transferase hexapeptide repeat family. In terms of assembly, homotrimer. It depends on Mg(2+) as a cofactor.

The protein resides in the cytoplasm. The catalysed reaction is alpha-D-glucosamine 1-phosphate + acetyl-CoA = N-acetyl-alpha-D-glucosamine 1-phosphate + CoA + H(+). It carries out the reaction N-acetyl-alpha-D-glucosamine 1-phosphate + UTP + H(+) = UDP-N-acetyl-alpha-D-glucosamine + diphosphate. Its pathway is nucleotide-sugar biosynthesis; UDP-N-acetyl-alpha-D-glucosamine biosynthesis; N-acetyl-alpha-D-glucosamine 1-phosphate from alpha-D-glucosamine 6-phosphate (route II): step 2/2. It participates in nucleotide-sugar biosynthesis; UDP-N-acetyl-alpha-D-glucosamine biosynthesis; UDP-N-acetyl-alpha-D-glucosamine from N-acetyl-alpha-D-glucosamine 1-phosphate: step 1/1. The protein operates within bacterial outer membrane biogenesis; LPS lipid A biosynthesis. Functionally, catalyzes the last two sequential reactions in the de novo biosynthetic pathway for UDP-N-acetylglucosamine (UDP-GlcNAc). The C-terminal domain catalyzes the transfer of acetyl group from acetyl coenzyme A to glucosamine-1-phosphate (GlcN-1-P) to produce N-acetylglucosamine-1-phosphate (GlcNAc-1-P), which is converted into UDP-GlcNAc by the transfer of uridine 5-monophosphate (from uridine 5-triphosphate), a reaction catalyzed by the N-terminal domain. The chain is Bifunctional protein GlmU from Staphylococcus aureus (strain NCTC 8325 / PS 47).